We begin with the raw amino-acid sequence, 919 residues long: Probable dipeptidyl-aminopeptidase B (919 aa).

Residues 1 to 89 (MGANSRVNDD…DGYVPSGGKP (89 aa)) form a disordered region. Residues 1–95 (MGANSRVNDD…GGKPAQRRTR (95 aa)) are Cytoplasmic-facing. A compositionally biased stretch (low complexity) spans 27-38 (DSSSTASISLTL). Residues 44-55 (HTATEPSKSTNG) show a composition bias toward polar residues. Residues 96–116 (IVFWLLVALCVGGWAMAFIIM) form a helical; Signal-anchor for type II membrane protein membrane-spanning segment. Topologically, residues 117–919 (ATSPNNRHST…RVIRRLLHFG (803 aa)) are vacuolar. The segment at 121–150 (NNRHSTSDSSSGGSESEIVKPNTPHDGKKI) is disordered. Low complexity predominate over residues 127 to 136 (SDSSSGGSES). 5 N-linked (GlcNAc...) asparagine glycosylation sites follow: Asn-207, Asn-303, Asn-355, Asn-577, and Asn-665. Ser-760 (charge relay system) is an active-site residue. Asn-814 and Asn-819 each carry an N-linked (GlcNAc...) asparagine glycan. Residues Asp-837 and His-870 each act as charge relay system in the active site.

Belongs to the peptidase S9B family.

The protein localises to the vacuole membrane. It carries out the reaction Release of an N-terminal dipeptide, Xaa-Yaa-|-Zaa-, from a polypeptide, preferentially when Yaa is Pro, provided Zaa is neither Pro nor hydroxyproline.. In terms of biological role, type IV dipeptidyl-peptidase which removes N-terminal dipeptides sequentially from polypeptides having unsubstituted N-termini provided that the penultimate residue is proline. In Arthroderma otae (strain ATCC MYA-4605 / CBS 113480) (Microsporum canis), this protein is Probable dipeptidyl-aminopeptidase B (DAPB).